The following is a 113-amino-acid chain: Stigma/stylar cysteine-rich adhesin (113 aa).

An N-terminal signal peptide occupies residues 1–22 (MARSSAVCFLLLLAFLIGTASA). 4 disulfides stabilise this stretch: Cys-25–Cys-72, Cys-35–Cys-49, Cys-50–Cys-95, and Cys-70–Cys-109.

This sequence belongs to the plant LTP family. Highly expressed in style and stigma, abundant in young leaves and petals, and low expression in young anthers at pollen mother cell stage with an active tapetum. Not expressed in mature leaves or in pollen grains or tubes. Found in the stylar transmitting tract epidermis and in the stylar extracellular matrix.

In terms of biological role, acts as an adhesive agent between the pollen tube wall and the stylar transmitting tract epidermis. Binds a stylar pectin in a pH-dependent manner. Enhances activity of chemocyanin, a diffusible chemotropic factor. The polypeptide is Stigma/stylar cysteine-rich adhesin (SCA) (Lilium longiflorum (Trumpet lily)).